A 166-amino-acid polypeptide reads, in one-letter code: Small ribosomal subunit protein uS5 (166 aa).

The 64-residue stretch at 10–73 (QIEKLISLNR…TSARKNLRFV (64 aa)) folds into the S5 DRBM domain.

It belongs to the universal ribosomal protein uS5 family. Part of the 30S ribosomal subunit. Contacts proteins S4 and S8.

Its function is as follows. With S4 and S12 plays an important role in translational accuracy. Functionally, located at the back of the 30S subunit body where it stabilizes the conformation of the head with respect to the body. This is Small ribosomal subunit protein uS5 from Borrelia garinii subsp. bavariensis (strain ATCC BAA-2496 / DSM 23469 / PBi) (Borreliella bavariensis).